The sequence spans 345 residues: Aurora kinase B (345 aa).

Residues 1-25 (MAQKENAYPWPYGSKTSQSGLNTLS) are disordered. The span at 14–25 (SKTSQSGLNTLS) shows a compositional bias: polar residues. T35 bears the Phosphothreonine mark. The interval 50–77 (TAAPGQKLAENKSQGSTASQGSQNKQPF) is disordered. Polar residues predominate over residues 60 to 77 (NKSQGSTASQGSQNKQPF). The residue at position 62 (S62) is a Phosphoserine. The Protein kinase domain maps to 82 to 332 (FEIGRPLGKG…LAEVAAHPWV (251 aa)). Residues 88 to 96 (LGKGKFGNV) and K111 each bind ATP. D205 serves as the catalytic Proton acceptor. N6-acetyllysine is present on K220. S232 carries the post-translational modification Phosphoserine. T237 bears the Phosphothreonine; by autocatalysis mark.

This sequence belongs to the protein kinase superfamily. Ser/Thr protein kinase family. Aurora subfamily. Component of the chromosomal passenger complex (CPC) composed of at least BIRC5/survivin, CDCA8/borealin, INCENP, AURKB or AURKC; predominantly independent AURKB- and AURKC-containing complexes exist. Associates with RACGAP1 during M phase. Interacts with SPDYC; this interaction may be required for proper localization of active, Thr-237-phosphorylated AURKB form during prometaphase and metaphase. Interacts with p53/TP53. Interacts (via the middle kinase domain) with NOC2L (via the N- and C-terminus domains). Interacts with CDCA1. Interacts with EVI5. Interacts with JTB. Interacts with NDC80. Interacts with PSMA3. Interacts with RNF2/RING1B. Interacts with SEPTIN1. Interacts with SIRT2. Interacts with TACC1. Interacts with TTC28. The phosphorylation of Thr-237 requires the binding to INCENP and occurs by means of an autophosphorylation mechanism. Thr-237 phosphorylation is indispensable for the AURKB kinase activity. In terms of processing, acetylated at Lys-220 by KAT5 at kinetochores, increasing AURKB activity and promoting accurate chromosome segregation in mitosis. Post-translationally, ubiquitinated by different BCR (BTB-CUL3-RBX1) E3 ubiquitin ligase complexes. Ubiquitinated by the BCR(KLHL9-KLHL13) E3 ubiquitin ligase complex, ubiquitination leads to removal from mitotic chromosomes and is required for cytokinesis. During anaphase, the BCR(KLHL21) E3 ubiquitin ligase complex recruits the CPC complex from chromosomes to the spindle midzone and mediates the ubiquitination of AURKB. Ubiquitination of AURKB by BCR(KLHL21) E3 ubiquitin ligase complex may not lead to its degradation by the proteasome. Deubiquitinated by USP35; inhibiting CDH1-mediated degradation of AURKB. Expressed in testis, intestine and spleen. All of them are tissues that contain a large number of proliferating cells. Expressed during S phase, in a cell-cycle-dependent fashion.

It is found in the nucleus. Its subcellular location is the chromosome. It localises to the centromere. The protein resides in the kinetochore. The protein localises to the cytoplasm. It is found in the cytoskeleton. Its subcellular location is the spindle. It localises to the midbody. It catalyses the reaction L-seryl-[protein] + ATP = O-phospho-L-seryl-[protein] + ADP + H(+). The enzyme catalyses L-threonyl-[protein] + ATP = O-phospho-L-threonyl-[protein] + ADP + H(+). Activity is greatly increased when AURKB is within the CPC complex. In particular, AURKB-phosphorylated INCENP acts as an activator of AURKB. Positive feedback between HASPIN and AURKB contributes to CPC localization. In terms of biological role, serine/threonine-protein kinase component of the chromosomal passenger complex (CPC), a complex that acts as a key regulator of mitosis. The CPC complex has essential functions at the centromere in ensuring correct chromosome alignment and segregation and is required for chromatin-induced microtubule stabilization and spindle assembly. Involved in the bipolar attachment of spindle microtubules to kinetochores and is a key regulator for the onset of cytokinesis during mitosis. Required for central/midzone spindle assembly and cleavage furrow formation. Key component of the cytokinesis checkpoint, a process required to delay abscission to prevent both premature resolution of intercellular chromosome bridges and accumulation of DNA damage: phosphorylates CHMP4C, leading to retain abscission-competent VPS4 (VPS4A and/or VPS4B) at the midbody ring until abscission checkpoint signaling is terminated at late cytokinesis. AURKB phosphorylates the CPC complex subunits BIRC5/survivin, CDCA8/borealin and INCENP. Phosphorylation of INCENP leads to increased AURKB activity. Other known AURKB substrates involved in centromeric functions and mitosis are CENPA, DES/desmin, GPAF, KIF2C, NSUN2, RACGAP1, SEPTIN1, VIM/vimentin, HASPIN, and histone H3. A positive feedback loop involving HASPIN and AURKB contributes to localization of CPC to centromeres. Phosphorylation of VIM controls vimentin filament segregation in cytokinetic process, whereas histone H3 is phosphorylated at 'Ser-10' and 'Ser-28' during mitosis (H3S10ph and H3S28ph, respectively). AURKB is also required for kinetochore localization of BUB1 and SGO1. Phosphorylation of p53/TP53 negatively regulates its transcriptional activity. Key regulator of active promoters in resting B- and T-lymphocytes: acts by mediating phosphorylation of H3S28ph at active promoters in resting B-cells, inhibiting RNF2/RING1B-mediated ubiquitination of histone H2A and enhancing binding and activity of the USP16 deubiquitinase at transcribed genes. Acts as an inhibitor of CGAS during mitosis: catalyzes phosphorylation of the N-terminus of CGAS during the G2-M transition, blocking CGAS liquid phase separation and activation, and thereby preventing CGAS-induced autoimmunity. Phosphorylates KRT5 during anaphase and telophase. Phosphorylates ATXN10 which promotes phosphorylation of ATXN10 by PLK1 and may play a role in the regulation of cytokinesis and stimulating the proteasomal degradation of ATXN10. The protein is Aurora kinase B (Aurkb) of Mus musculus (Mouse).